Consider the following 346-residue polypeptide: Mannonate dehydratase (346 aa).

Belongs to the mannonate dehydratase family. Fe(2+) is required as a cofactor. Requires Mn(2+) as cofactor.

The catalysed reaction is D-mannonate = 2-dehydro-3-deoxy-D-gluconate + H2O. It participates in carbohydrate metabolism; pentose and glucuronate interconversion. Catalyzes the dehydration of D-mannonate. In Cupriavidus taiwanensis (strain DSM 17343 / BCRC 17206 / CCUG 44338 / CIP 107171 / LMG 19424 / R1) (Ralstonia taiwanensis (strain LMG 19424)), this protein is Mannonate dehydratase.